Reading from the N-terminus, the 149-residue chain is Aspartate 1-decarboxylase (149 aa).

Catalysis depends on Ser-25, which acts as the Schiff-base intermediate with substrate; via pyruvic acid. Ser-25 carries the pyruvic acid (Ser) modification. Thr-57 lines the substrate pocket. Tyr-58 acts as the Proton donor in catalysis. A substrate-binding site is contributed by 73 to 75 (GAA). A disordered region spans residues 119 to 149 (GDPAAALPGDPSSLRGDVLDPAGARGLGGGA).

The protein belongs to the PanD family. In terms of assembly, heterooctamer of four alpha and four beta subunits. Pyruvate is required as a cofactor. Post-translationally, is synthesized initially as an inactive proenzyme, which is activated by self-cleavage at a specific serine bond to produce a beta-subunit with a hydroxyl group at its C-terminus and an alpha-subunit with a pyruvoyl group at its N-terminus.

It localises to the cytoplasm. It carries out the reaction L-aspartate + H(+) = beta-alanine + CO2. Its pathway is cofactor biosynthesis; (R)-pantothenate biosynthesis; beta-alanine from L-aspartate: step 1/1. In terms of biological role, catalyzes the pyruvoyl-dependent decarboxylation of aspartate to produce beta-alanine. This is Aspartate 1-decarboxylase from Parafrankia sp. (strain EAN1pec).